The chain runs to 105 residues: Mini zinc finger protein 2 (105 aa).

The tract at residues 1 to 29 (MGPQQDRSAAKPYANGSTAAAAAAGRKEN) is disordered. The ZF-HD dimerization-type; degenerate zinc-finger motif lies at 35 to 84 (YRECQRNHAASIGGHAVDGCREFMASGADGTAAALLCAACGCHQSFHRRE).

As to quaternary structure, homo- and heterodimers.

It localises to the cytoplasm. Its function is as follows. Inhibits zinc finger homeodomain (ZHD) transcription factors, by interacting with them to prevent both their nuclear localization and their DNA-binding properties. In Oryza sativa subsp. indica (Rice), this protein is Mini zinc finger protein 2 (MIF2).